Reading from the N-terminus, the 325-residue chain is Tagatose 1,6-diphosphate aldolase 1 (325 aa).

Belongs to the aldolase LacD family.

The catalysed reaction is D-tagatofuranose 1,6-bisphosphate = D-glyceraldehyde 3-phosphate + dihydroxyacetone phosphate. It participates in carbohydrate metabolism; D-tagatose 6-phosphate degradation; D-glyceraldehyde 3-phosphate and glycerone phosphate from D-tagatose 6-phosphate: step 2/2. This Enterococcus faecalis (strain ATCC 700802 / V583) protein is Tagatose 1,6-diphosphate aldolase 1 (lacD1).